A 427-amino-acid polypeptide reads, in one-letter code: Gamma-glutamyl phosphate reductase (427 aa).

The protein belongs to the gamma-glutamyl phosphate reductase family.

The protein localises to the cytoplasm. It carries out the reaction L-glutamate 5-semialdehyde + phosphate + NADP(+) = L-glutamyl 5-phosphate + NADPH + H(+). It functions in the pathway amino-acid biosynthesis; L-proline biosynthesis; L-glutamate 5-semialdehyde from L-glutamate: step 2/2. In terms of biological role, catalyzes the NADPH-dependent reduction of L-glutamate 5-phosphate into L-glutamate 5-semialdehyde and phosphate. The product spontaneously undergoes cyclization to form 1-pyrroline-5-carboxylate. In Gluconobacter oxydans (strain 621H) (Gluconobacter suboxydans), this protein is Gamma-glutamyl phosphate reductase.